The primary structure comprises 787 residues: Endonuclease MutS2 (787 aa).

Residue 336-343 (GPNTGGKT) participates in ATP binding. Residues 712–787 (LDLRGVRYED…GNGATEVQFK (76 aa)) enclose the Smr domain.

Belongs to the DNA mismatch repair MutS family. MutS2 subfamily. Homodimer. Binds to stalled ribosomes, contacting rRNA.

Endonuclease that is involved in the suppression of homologous recombination and thus may have a key role in the control of bacterial genetic diversity. Functionally, acts as a ribosome collision sensor, splitting the ribosome into its 2 subunits. Detects stalled/collided 70S ribosomes which it binds and splits by an ATP-hydrolysis driven conformational change. Acts upstream of the ribosome quality control system (RQC), a ribosome-associated complex that mediates the extraction of incompletely synthesized nascent chains from stalled ribosomes and their subsequent degradation. Probably generates substrates for RQC. The protein is Endonuclease MutS2 of Lactiplantibacillus plantarum (strain ATCC BAA-793 / NCIMB 8826 / WCFS1) (Lactobacillus plantarum).